A 394-amino-acid chain; its full sequence is ATP phosphoribosyltransferase regulatory subunit (394 aa).

It belongs to the class-II aminoacyl-tRNA synthetase family. HisZ subfamily. As to quaternary structure, heteromultimer composed of HisG and HisZ subunits.

It localises to the cytoplasm. It functions in the pathway amino-acid biosynthesis; L-histidine biosynthesis; L-histidine from 5-phospho-alpha-D-ribose 1-diphosphate: step 1/9. In terms of biological role, required for the first step of histidine biosynthesis. May allow the feedback regulation of ATP phosphoribosyltransferase activity by histidine. The polypeptide is ATP phosphoribosyltransferase regulatory subunit (Geobacillus thermodenitrificans (strain NG80-2)).